We begin with the raw amino-acid sequence, 396 residues long: Argininosuccinate synthase (396 aa).

9–17 contacts ATP; sequence AYSGGLDTS. Tyrosine 85 is a binding site for L-citrulline. Residue glycine 115 coordinates ATP. Threonine 117, asparagine 121, and aspartate 122 together coordinate L-aspartate. Asparagine 121 is an L-citrulline binding site. Residues arginine 125, serine 173, glutamate 258, and tyrosine 270 each coordinate L-citrulline.

The protein belongs to the argininosuccinate synthase family. Type 1 subfamily. As to quaternary structure, homotetramer.

The protein localises to the cytoplasm. The catalysed reaction is L-citrulline + L-aspartate + ATP = 2-(N(omega)-L-arginino)succinate + AMP + diphosphate + H(+). It functions in the pathway amino-acid biosynthesis; L-arginine biosynthesis; L-arginine from L-ornithine and carbamoyl phosphate: step 2/3. The protein is Argininosuccinate synthase of Streptococcus agalactiae serotype III (strain NEM316).